Reading from the N-terminus, the 195-residue chain is Thymidine kinase (195 aa).

Residues 15–22 (GSMFSGKS) and 88–91 (DEVQ) contribute to the ATP site. Glu-89 serves as the catalytic Proton acceptor. The Zn(2+) site is built by Cys-145, Cys-148, Cys-183, and Cys-186.

The protein belongs to the thymidine kinase family. As to quaternary structure, homotetramer.

Its subcellular location is the cytoplasm. It carries out the reaction thymidine + ATP = dTMP + ADP + H(+). In Bacillus cereus (strain ZK / E33L), this protein is Thymidine kinase.